Reading from the N-terminus, the 91-residue chain is Non-specific lipid-transfer protein 1 (91 aa).

4 disulfide bridges follow: Cys3-Cys50, Cys13-Cys27, Cys28-Cys73, and Cys48-Cys87.

It belongs to the plant LTP family.

In terms of biological role, plant non-specific lipid-transfer proteins transfer phospholipids as well as galactolipids across membranes. May play a role in wax or cutin deposition in the cell walls of expanding epidermal cells and certain secretory tissues. In Prunus domestica (Garden plum), this protein is Non-specific lipid-transfer protein 1.